A 138-amino-acid chain; its full sequence is Prefoldin subunit alpha (138 aa).

It belongs to the prefoldin subunit alpha family. As to quaternary structure, heterohexamer of two alpha and four beta subunits.

Its subcellular location is the cytoplasm. In terms of biological role, molecular chaperone capable of stabilizing a range of proteins. Seems to fulfill an ATP-independent, HSP70-like function in archaeal de novo protein folding. The chain is Prefoldin subunit alpha from Methanosphaera stadtmanae (strain ATCC 43021 / DSM 3091 / JCM 11832 / MCB-3).